The primary structure comprises 320 residues: 1-aminocyclopropane-1-carboxylate oxidase 3 (320 aa).

The region spanning 153–253 (PNFGTKVSNY…RMSLASFYNP (101 aa)) is the Fe2OG dioxygenase domain. Positions 177, 179, and 234 each coordinate Fe cation.

The protein belongs to the iron/ascorbate-dependent oxidoreductase family. Requires Fe cation as cofactor.

The enzyme catalyses 1-aminocyclopropane-1-carboxylate + L-ascorbate + O2 = ethene + L-dehydroascorbate + hydrogen cyanide + CO2 + 2 H2O. It functions in the pathway alkene biosynthesis; ethylene biosynthesis via S-adenosyl-L-methionine; ethylene from S-adenosyl-L-methionine: step 2/2. This chain is 1-aminocyclopropane-1-carboxylate oxidase 3 (ACO3), found in Petunia hybrida (Petunia).